Consider the following 152-residue polypeptide: Antiholin-like protein LrgA (152 aa).

4 helical membrane-spanning segments follow: residues 23–43 (YSIFQQALTIAVILLISKIIE), 45–65 (FMPIPMPASVIGLVLLFIALC), 77–97 (VGTALTNNIGFLFVPAGISVI), and 108–128 (ILIILLIIISTLLLLICTGFA).

This sequence belongs to the CidA/LrgA family. LrgA subfamily.

It is found in the cell membrane. In terms of biological role, inhibits the expression or activity of extracellular murein hydrolases by interacting, possibly with LrgB, with the holin-like proteins CidA and/or CidB. The LrgAB and CidAB proteins may affect the proton motive force of the membrane. May be involved in programmed cell death (PCD), possibly triggering PCD in response to antibiotics and environmental stresses. The protein is Antiholin-like protein LrgA of Staphylococcus epidermidis (strain ATCC 35984 / DSM 28319 / BCRC 17069 / CCUG 31568 / BM 3577 / RP62A).